The primary structure comprises 538 residues: DALR anticodon-binding domain-containing protein 3 (538 aa).

As to quaternary structure, part of a complex containing tRNA(Arg) and METTL2. Interacts with tRNA(Arg)(CCU) and tRNA(Arg)(UCU). Interacts with METTL2.

Its function is as follows. Involved in tRNA methylation. Facilitates the recognition and targeting of tRNA(Arg)(CCU) and tRNA(Arg)(UCU) substrates for N(3)-methylcytidine modification by METTL2. This chain is DALR anticodon-binding domain-containing protein 3 (Dalrd3), found in Rattus norvegicus (Rat).